We begin with the raw amino-acid sequence, 181 residues long: Adenine phosphoribosyltransferase (181 aa).

It belongs to the purine/pyrimidine phosphoribosyltransferase family. As to quaternary structure, homodimer.

The protein localises to the cytoplasm. The enzyme catalyses AMP + diphosphate = 5-phospho-alpha-D-ribose 1-diphosphate + adenine. It participates in purine metabolism; AMP biosynthesis via salvage pathway; AMP from adenine: step 1/1. In terms of biological role, catalyzes a salvage reaction resulting in the formation of AMP, that is energically less costly than de novo synthesis. The protein is Adenine phosphoribosyltransferase of Psychromonas ingrahamii (strain DSM 17664 / CCUG 51855 / 37).